Reading from the N-terminus, the 324-residue chain is Methionyl-tRNA formyltransferase (324 aa).

Position 114-117 (114-117) interacts with (6S)-5,6,7,8-tetrahydrofolate; it reads SLLP.

This sequence belongs to the Fmt family.

It carries out the reaction L-methionyl-tRNA(fMet) + (6R)-10-formyltetrahydrofolate = N-formyl-L-methionyl-tRNA(fMet) + (6S)-5,6,7,8-tetrahydrofolate + H(+). Attaches a formyl group to the free amino group of methionyl-tRNA(fMet). The formyl group appears to play a dual role in the initiator identity of N-formylmethionyl-tRNA by promoting its recognition by IF2 and preventing the misappropriation of this tRNA by the elongation apparatus. The polypeptide is Methionyl-tRNA formyltransferase (Parabacteroides distasonis (strain ATCC 8503 / DSM 20701 / CIP 104284 / JCM 5825 / NCTC 11152)).